A 397-amino-acid polypeptide reads, in one-letter code: Acetate kinase 1 (397 aa).

Residue Asn8 participates in Mg(2+) binding. Lys15 contacts ATP. Arg89 is a binding site for substrate. Asp146 serves as the catalytic Proton donor/acceptor. ATP is bound by residues 206 to 210 (HLGNG), 281 to 283 (DLR), and 329 to 333 (GIGEN). Glu382 lines the Mg(2+) pocket.

This sequence belongs to the acetokinase family. Homodimer. Requires Mg(2+) as cofactor. The cofactor is Mn(2+).

It localises to the cytoplasm. It catalyses the reaction acetate + ATP = acetyl phosphate + ADP. It functions in the pathway metabolic intermediate biosynthesis; acetyl-CoA biosynthesis; acetyl-CoA from acetate: step 1/2. Functionally, catalyzes the formation of acetyl phosphate from acetate and ATP. Can also catalyze the reverse reaction. The polypeptide is Acetate kinase 1 (Listeria monocytogenes serovar 1/2a (strain ATCC BAA-679 / EGD-e)).